Here is a 514-residue protein sequence, read N- to C-terminus: Lysine--tRNA ligase (514 aa).

Residues 1 to 13 are compositionally biased toward low complexity; sequence MSKPNNQNQQNNQ. A disordered region spans residues 1–21; it reads MSKPNNQNQQNNQEPAPEDAN. Mg(2+) is bound by residues Glu422 and Glu429.

It belongs to the class-II aminoacyl-tRNA synthetase family. As to quaternary structure, homodimer. Requires Mg(2+) as cofactor.

The protein localises to the cytoplasm. It carries out the reaction tRNA(Lys) + L-lysine + ATP = L-lysyl-tRNA(Lys) + AMP + diphosphate. This is Lysine--tRNA ligase from Psychrobacter cryohalolentis (strain ATCC BAA-1226 / DSM 17306 / VKM B-2378 / K5).